Reading from the N-terminus, the 159-residue chain is uncharacterized protein (159 aa).

Positions 9–36 (VTSGNKEKKKKRSSAGLTGHAPPAADSS) are disordered.

This is an uncharacterized protein from Caenorhabditis elegans.